We begin with the raw amino-acid sequence, 173 residues long: Translocon-associated protein subunit delta (173 aa).

An N-terminal signal peptide occupies residues 1–23; that stretch reads MAAMASLGALALLLLSSLSRCSA. Residues 24–144 lie on the Lumenal side of the membrane; it reads EACLEPQITP…SVDHRGTWNG (121 aa). C26 and C57 are disulfide-bonded. K73 is covalently cross-linked (Glycyl lysine isopeptide (Lys-Gly) (interchain with G-Cter in ubiquitin)). The helical transmembrane segment at 145 to 165 threads the bilayer; that stretch reads PWVSTEVLAAAIGLVIYYLAF. At 166–173 the chain is on the cytoplasmic side; the sequence is SAKSHIQA.

This sequence belongs to the TRAP-delta family. As to quaternary structure, heterotetramer of TRAP-alpha, TRAP-beta, TRAP-delta and TRAP-gamma.

It localises to the endoplasmic reticulum membrane. TRAP proteins are part of a complex whose function is to bind calcium to the ER membrane and thereby regulate the retention of ER resident proteins. The sequence is that of Translocon-associated protein subunit delta (SSR4) from Homo sapiens (Human).